Consider the following 403-residue polypeptide: Non-structural maintenance of chromosomes element 4 homolog A (403 aa).

Basic and acidic residues predominate over residues 1–45 (MRKTVKRESEATGGKREADDEPEKLRSVKKEKQRKTEADSVRPDE). 3 disordered regions span residues 1-57 (MRKT…QGIS), 194-226 (LKQR…EEKT), and 342-403 (SSCP…LTSS). The span at 196-206 (QRKRAPNRKRT) shows a compositional bias: basic residues. A compositionally biased stretch (low complexity) spans 342–353 (SSCPAASAPASA). The span at 354–363 (DFTQDTQTTP) shows a compositional bias: polar residues. Over residues 384 to 393 (TPDKEGDGTR) the composition is skewed to basic and acidic residues. Over residues 394–403 (RRCKRRLTSS) the composition is skewed to basic residues.

This sequence belongs to the NSE4 family. As to quaternary structure, interacts with SMC5, SMC6A or SMC6B. The SMC5-SMC6 complex is composed of the SMC5 and SMC6 heterodimer attached via their hinge domain and from the non-SMC subunit NSE4A or NSE4B. As to expression, expressed in seedlings, rosette leaves and floral buds.

Its subcellular location is the nucleus. In terms of biological role, component of the SMC5-SMC6 complex, that promotes sister chromatid alignment after DNA damage and facilitates double-stranded DNA breaks (DSBs) repair via homologous recombination between sister chromatids. The polypeptide is Non-structural maintenance of chromosomes element 4 homolog A (NSE4A) (Arabidopsis thaliana (Mouse-ear cress)).